The following is a 2195-amino-acid chain: Genome polyprotein (2195 aa).

Glycine 2 carries N-myristoyl glycine; by host lipidation. The Cytoplasmic portion of the chain corresponds to 2–1505 (GAQVSTQKTG…HVSRAFICLQ (1504 aa)). Residues 567–583 (LLQGDVVEAVENAVARV) are amphipathic alpha-helix. Residues histidine 882 and aspartate 900 each act as for protease 2A activity in the active site. Residues cysteine 917 and cysteine 919 each coordinate Zn(2+). Cysteine 971 (for protease 2A activity) is an active-site residue. Zn(2+) contacts are provided by cysteine 977 and histidine 979. The membrane-binding stretch occupies residues 1111–1183 (NNGWLKKFTE…EQSAPSQSDQ (73 aa)). An oligomerization region spans residues 1111 to 1249 (NNGWLKKFTE…SPGAGKSVAT (139 aa)). Residues 1132–1136 (SIKIQ) form an RNA-binding region. An SF3 helicase domain is found at 1215–1371 (EKKMSNYIQF…SMYSQNGKIN (157 aa)). Residues cysteine 1379, cysteine 1391, and cysteine 1396 each coordinate Zn(2+). The C4-type; degenerate zinc-finger motif lies at 1379–1396 (CDEECCPVNFKRCCPLVC). Residues 1423 to 1430 (EYNHRHSV) are RNA-binding. The tract at residues 1434 to 1439 (LEALFQ) is oligomerization. Residues 1506 to 1521 (ALTTFVSVAGIIYIIY) lie within the membrane without spanning it. Topologically, residues 1522–2195 (KLFAGFQGAY…TLRRKWLDSF (674 aa)) are cytoplasmic. At tyrosine 1531 the chain carries O-(5'-phospho-RNA)-tyrosine. In terms of domain architecture, Peptidase C3 spans 1551-1729 (GPAFEFAVAM…FSAALLKHYF (179 aa)). Catalysis depends on for protease 3C activity residues histidine 1590, glutamate 1621, and cysteine 1697. The 117-residue stretch at 1960–2076 (GHLIAFDYSG…SYPWPIDASL (117 aa)) folds into the RdRp catalytic domain. Aspartate 1966 and aspartate 2062 together coordinate Mg(2+).

It belongs to the picornaviruses polyprotein family. In terms of assembly, interacts with capsid protein VP1 and capsid protein VP3 to form heterotrimeric protomers. As to quaternary structure, interacts with capsid protein VP0, and capsid protein VP3 to form heterotrimeric protomers. Five protomers subsequently associate to form pentamers which serve as building blocks for the capsid. Interacts with capsid protein VP2, capsid protein VP3 and capsid protein VP4 following cleavage of capsid protein VP0. Interacts with capsid protein VP1 and capsid protein VP3 in the mature capsid. In terms of assembly, interacts with capsid protein VP0 and capsid protein VP1 to form heterotrimeric protomers. Five protomers subsequently associate to form pentamers which serve as building blocks for the capsid. Interacts with capsid protein VP4 in the mature capsid. Interacts with protein 2C; this interaction may be important for virion morphogenesis. As to quaternary structure, interacts with capsid protein VP1 and capsid protein VP3. Homodimer. In terms of assembly, homohexamer; forms a hexameric ring structure with 6-fold symmetry characteristic of AAA+ ATPases. Interacts (via N-terminus) with host RTN3 (via reticulon domain); this interaction is important for viral replication. Interacts with capsid protein VP3; this interaction may be important for virion morphogenesis. As to quaternary structure, interacts with protein 3CD. Homodimer. Interacts with host GBF1. Interacts (via GOLD domain) with host ACBD3 (via GOLD domain); this interaction allows the formation of a viral protein 3A/ACBD3 heterotetramer with a 2:2 stoichiometry, which will stimulate the recruitment of host PI4KB in order to synthesize PI4P at the viral RNA replication sites. In terms of assembly, interacts with RNA-directed RNA polymerase. As to quaternary structure, interacts with protein 3AB and with RNA-directed RNA polymerase. Interacts with Viral protein genome-linked and with protein 3CD. It depends on Mg(2+) as a cofactor. In terms of processing, specific enzymatic cleavages in vivo by the viral proteases yield processing intermediates and the mature proteins. Post-translationally, myristoylation is required for the formation of pentamers during virus assembly. Further assembly of 12 pentamers and a molecule of genomic RNA generates the provirion. During virion maturation, immature virions are rendered infectious following cleavage of VP0 into VP4 and VP2. This maturation seems to be an autocatalytic event triggered by the presence of RNA in the capsid and it is followed by a conformational change infectious virion. In terms of processing, myristoylation is required during RNA encapsidation and formation of the mature virus particle. Post-translationally, VPg is uridylylated by the polymerase into VPg-pUpU. This acts as a nucleotide-peptide primer for the genomic RNA replication.

Its subcellular location is the virion. It is found in the host cytoplasm. The protein localises to the host cytoplasmic vesicle membrane. The protein resides in the host nucleus. It carries out the reaction a ribonucleoside 5'-triphosphate + H2O = a ribonucleoside 5'-diphosphate + phosphate + H(+). The catalysed reaction is Selective cleavage of Tyr-|-Gly bond in the picornavirus polyprotein.. It catalyses the reaction RNA(n) + a ribonucleoside 5'-triphosphate = RNA(n+1) + diphosphate. The enzyme catalyses Selective cleavage of Gln-|-Gly bond in the poliovirus polyprotein. In other picornavirus reactions Glu may be substituted for Gln, and Ser or Thr for Gly.. Replication or transcription is subject to high level of random mutations by the nucleotide analog ribavirin. Forms an icosahedral capsid of pseudo T=3 symmetry with capsid proteins VP2 and VP3. The capsid is 300 Angstroms in diameter, composed of 60 copies of each capsid protein and enclosing the viral positive strand RNA genome. Capsid protein VP1 mainly forms the vertices of the capsid. Capsid protein VP1 interacts with host cell receptor to provide virion attachment to target host cells. This attachment induces virion internalization. Tyrosine kinases are probably involved in the entry process. After binding to its receptor, the capsid undergoes conformational changes. Capsid protein VP1 N-terminus (that contains an amphipathic alpha-helix) and capsid protein VP4 are externalized. Together, they shape a pore in the host membrane through which viral genome is translocated to host cell cytoplasm. Its function is as follows. Forms an icosahedral capsid of pseudo T=3 symmetry with capsid proteins VP2 and VP3. The capsid is 300 Angstroms in diameter, composed of 60 copies of each capsid protein and enclosing the viral positive strand RNA genome. Functionally, lies on the inner surface of the capsid shell. After binding to the host receptor, the capsid undergoes conformational changes. Capsid protein VP4 is released, Capsid protein VP1 N-terminus is externalized, and together, they shape a pore in the host membrane through which the viral genome is translocated into the host cell cytoplasm. In terms of biological role, component of immature procapsids, which is cleaved into capsid proteins VP4 and VP2 after maturation. Allows the capsid to remain inactive before the maturation step. Cysteine protease that cleaves viral polyprotein and specific host proteins. It is responsible for the autocatalytic cleavage between the P1 and P2 regions, which is the first cleavage occurring in the polyprotein. Also cleaves the host translation initiation factor EIF4G1, in order to shut down the capped cellular mRNA translation. Inhibits the host nucleus-cytoplasm protein and RNA trafficking by cleaving host members of the nuclear pores. Counteracts stress granule formation probably by antagonizing its assembly or promoting its dissassembly. Its function is as follows. Plays an essential role in the virus replication cycle by acting as a viroporin. Creates a pore in the host endoplasmic reticulum and as a consequence releases Ca2+ in the cytoplasm of infected cell. In turn, high levels of cytoplasmic calcium may trigger membrane trafficking and transport of viral ER-associated proteins to viroplasms, sites of viral genome replication. Functionally, induces and associates with structural rearrangements of intracellular membranes. Displays RNA-binding, nucleotide binding and NTPase activities. May play a role in virion morphogenesis and viral RNA encapsidation by interacting with the capsid protein VP3. In terms of biological role, localizes the viral replication complex to the surface of membranous vesicles. Together with protein 3CD binds the Cis-Active RNA Element (CRE) which is involved in RNA synthesis initiation. Acts as a cofactor to stimulate the activity of 3D polymerase, maybe through a nucleid acid chaperone activity. Localizes the viral replication complex to the surface of membranous vesicles. It inhibits host cell endoplasmic reticulum-to-Golgi apparatus transport and causes the disassembly of the Golgi complex, possibly through GBF1 interaction. This would result in depletion of MHC, trail receptors and IFN receptors at the host cell surface. Plays an essential role in viral RNA replication by recruiting ACBD3 and PI4KB at the viral replication sites, thereby allowing the formation of the rearranged membranous structures where viral replication takes place. Its function is as follows. Acts as a primer for viral RNA replication and remains covalently bound to viral genomic RNA. VPg is uridylylated prior to priming replication into VPg-pUpU. The oriI viral genomic sequence may act as a template for this. The VPg-pUpU is then used as primer on the genomic RNA poly(A) by the RNA-dependent RNA polymerase to replicate the viral genome. During genome replication, the VPg-RNA linkage is removed by the host TDP2, thereby accelerating replication. During the late stage of the replication cycle, host TDP2 is excluded from sites of viral RNA synthesis and encapsidation, allowing for the generation of progeny virions. Functionally, involved in the viral replication complex and viral polypeptide maturation. It exhibits protease activity with a specificity and catalytic efficiency that is different from protease 3C. Protein 3CD lacks polymerase activity. The 3C domain in the context of protein 3CD may have an RNA binding activity. Protein 3CD binds to the 5'UTR of the viral genome. In terms of biological role, replicates the viral genomic RNA on the surface of intracellular membranes. May form linear arrays of subunits that propagate along a strong head-to-tail interaction called interface-I. Covalently attaches UMP to a tyrosine of VPg, which is used to prime RNA synthesis. The positive stranded RNA genome is first replicated at virus induced membranous vesicles, creating a dsRNA genomic replication form. This dsRNA is then used as template to synthesize positive stranded RNA genomes. ss(+)RNA genomes are either translated, replicated or encapsidated. Major viral protease that mediates proteolytic processing of the polyprotein. Cleaves host EIF5B, contributing to host translation shutoff. Also cleaves host PABPC1, contributing to host translation shutoff. Cleaves host NLRP1, triggers host N-glycine-mediated degradation of the autoinhibitory NLRP1 N-terminal fragment. This is Genome polyprotein from Echovirus 11 (strain Gregory).